A 472-amino-acid polypeptide reads, in one-letter code: MAKCGSCGPGYKTPLDAMKGPREEILYLPCIYRNTGINKPDYLATVDVNPKSPKYSQVIHRLPMPNTNDELHHSGWNTCSSCYGDASKVRNKLILPCLISSRIYVVDVGTDPRAPRIHKTVEPYEVFWKCGLANLHTSHCLGCGEIMISSIGDPYGNGKGGFVLLDGETFEVKGNWEAEGEAAPFGYDFWYQPRHNVMISTEWGAPKAFALGFKMEEVQAGMYGHSLNVWDWTEHRRIQTIDLGEDGLIPLEIRFLHDPDAAQGLVGCALSSTVFRFYKEKDGKWAAEKVIKVPSKKVEGWALPEMPGLITDILISLDDRFLYFSNWLHGDIRQYDITDPRNPKLVGQIFLGGSILRGGPVTVLEDKDLECQPDPVIVKGKKVPGGPQMIQLSLDGKRLYVTNSLYSKWDKQFYPDMIKEGSVMLQIDVDTEKGGLKLNPNFLVDFGKEPGGPVLAHELRYPGGDCSSDIWV.

Belongs to the selenium-binding protein family.

It localises to the nucleus. The protein localises to the cytoplasm. The protein resides in the cytosol. It is found in the membrane. It carries out the reaction methanethiol + O2 + H2O = hydrogen sulfide + formaldehyde + H2O2 + H(+). It functions in the pathway organosulfur degradation. Its function is as follows. Catalyzes the oxidation of methanethiol, an organosulfur compound known to be produced in substantial amounts by gut bacteria. Selenium-binding protein which may be involved in the sensing of reactive xenobiotics in the cytoplasm. May be involved in intra-Golgi protein transport. The chain is Methanethiol oxidase (selenbp1) from Xenopus tropicalis (Western clawed frog).